The primary structure comprises 35 residues: Ranatuerin-2SPa (35 aa).

A disulfide bridge links C28 with C33.

Expressed by the skin glands.

The protein resides in the secreted. Functionally, antibacterial activity against Gram-positive bacterium S.aureus. Shows no detectable hemolytic activity towards human erythrocytes. This Lithobates septentrionalis (Mink frog) protein is Ranatuerin-2SPa.